A 223-amino-acid polypeptide reads, in one-letter code: Glycerol-3-phosphate acyltransferase (223 aa).

A run of 5 helical transmembrane segments spans residues 2–22, 52–72, 78–98, 112–132, and 153–173; these read LEIL…GLVI, WGVA…WLAF, PVFV…SCFM, IFLP…MLVI, and LAVS…AVVV. A disordered region spans residues 191-223; the sequence is WLKSKNKGAAAGNAAEGDDTQNMNPQDAGRKDG.

The protein belongs to the PlsY family. In terms of assembly, probably interacts with PlsX.

It localises to the cell inner membrane. The enzyme catalyses an acyl phosphate + sn-glycerol 3-phosphate = a 1-acyl-sn-glycero-3-phosphate + phosphate. It functions in the pathway lipid metabolism; phospholipid metabolism. In terms of biological role, catalyzes the transfer of an acyl group from acyl-phosphate (acyl-PO(4)) to glycerol-3-phosphate (G3P) to form lysophosphatidic acid (LPA). This enzyme utilizes acyl-phosphate as fatty acyl donor, but not acyl-CoA or acyl-ACP. In Desulfovibrio desulfuricans (strain ATCC 27774 / DSM 6949 / MB), this protein is Glycerol-3-phosphate acyltransferase.